Here is a 454-residue protein sequence, read N- to C-terminus: tRNA modification GTPase MnmE (454 aa).

(6S)-5-formyl-5,6,7,8-tetrahydrofolate-binding residues include arginine 23, glutamate 80, and lysine 120. A TrmE-type G domain is found at 216–377 (GMKVVIAGRP…LRNHLKQSMG (162 aa)). Asparagine 226 serves as a coordination point for K(+). Residues 226-231 (NAGKSS), 245-251 (TDIAGTT), 270-273 (DTAG), 335-338 (NKAD), and 358-360 (SAR) contribute to the GTP site. Position 230 (serine 230) interacts with Mg(2+). Residues threonine 245, isoleucine 247, and threonine 250 each contribute to the K(+) site. Threonine 251 contributes to the Mg(2+) binding site. Lysine 454 contacts (6S)-5-formyl-5,6,7,8-tetrahydrofolate.

It belongs to the TRAFAC class TrmE-Era-EngA-EngB-Septin-like GTPase superfamily. TrmE GTPase family. Homodimer. Heterotetramer of two MnmE and two MnmG subunits. The cofactor is K(+).

Its subcellular location is the cytoplasm. Functionally, exhibits a very high intrinsic GTPase hydrolysis rate. Involved in the addition of a carboxymethylaminomethyl (cmnm) group at the wobble position (U34) of certain tRNAs, forming tRNA-cmnm(5)s(2)U34. This chain is tRNA modification GTPase MnmE, found in Escherichia coli (strain 55989 / EAEC).